Consider the following 451-residue polypeptide: Tubulin alpha-1 chain (451 aa).

Glutamine 11 is a binding site for GTP. Lysine 40 is modified (N6-acetyllysine). The GTP site is built by glutamate 71, glycine 144, threonine 145, threonine 179, asparagine 206, and asparagine 228. Glutamate 71 is a binding site for Mg(2+). Residue glutamate 254 is part of the active site.

This sequence belongs to the tubulin family. Dimer of alpha and beta chains. A typical microtubule is a hollow water-filled tube with an outer diameter of 25 nm and an inner diameter of 15 nM. Alpha-beta heterodimers associate head-to-tail to form protofilaments running lengthwise along the microtubule wall with the beta-tubulin subunit facing the microtubule plus end conferring a structural polarity. Microtubules usually have 13 protofilaments but different protofilament numbers can be found in some organisms and specialized cells. Requires Mg(2+) as cofactor. Post-translationally, undergoes a tyrosination/detyrosination cycle, the cyclic removal and re-addition of a C-terminal tyrosine residue by the enzymes tubulin tyrosine carboxypeptidase (TTCP) and tubulin tyrosine ligase (TTL), respectively. Acetylation of alpha chains at Lys-40 stabilizes microtubules and affects affinity and processivity of microtubule motors. This modification has a role in multiple cellular functions, ranging from cell motility, cell cycle progression or cell differentiation to intracellular trafficking and signaling.

It localises to the cytoplasm. It is found in the cytoskeleton. The enzyme catalyses GTP + H2O = GDP + phosphate + H(+). Tubulin is the major constituent of microtubules, a cylinder consisting of laterally associated linear protofilaments composed of alpha- and beta-tubulin heterodimers. Microtubules grow by the addition of GTP-tubulin dimers to the microtubule end, where a stabilizing cap forms. Below the cap, tubulin dimers are in GDP-bound state, owing to GTPase activity of alpha-tubulin. The protein is Tubulin alpha-1 chain (TUBA1) of Chlamydomonas reinhardtii (Chlamydomonas smithii).